Reading from the N-terminus, the 124-residue chain is MATINQLVRKPRQASTYKSASPALDKCPQRRGVCTRVYTSTPKKPNSALRKVAKVRLTNQEEVISYIGGEGHNLQEHSVVLIRGGRVKDLPGVRYHTVRGSLDAAGVAKRRQGRSKYGAKRPKS.

The tract at residues 1–25 (MATINQLVRKPRQASTYKSASPALD) is disordered.

It belongs to the universal ribosomal protein uS12 family. Part of the 30S ribosomal subunit. Contacts proteins S8 and S17. May interact with IF1 in the 30S initiation complex.

Its function is as follows. With S4 and S5 plays an important role in translational accuracy. Functionally, interacts with and stabilizes bases of the 16S rRNA that are involved in tRNA selection in the A site and with the mRNA backbone. Located at the interface of the 30S and 50S subunits, it traverses the body of the 30S subunit contacting proteins on the other side and probably holding the rRNA structure together. The combined cluster of proteins S8, S12 and S17 appears to hold together the shoulder and platform of the 30S subunit. This Xylella fastidiosa (strain 9a5c) protein is Small ribosomal subunit protein uS12.